An 89-amino-acid chain; its full sequence is Small ribosomal subunit protein uS17 (89 aa).

This sequence belongs to the universal ribosomal protein uS17 family. As to quaternary structure, part of the 30S ribosomal subunit.

In terms of biological role, one of the primary rRNA binding proteins, it binds specifically to the 5'-end of 16S ribosomal RNA. The sequence is that of Small ribosomal subunit protein uS17 from Polaromonas sp. (strain JS666 / ATCC BAA-500).